We begin with the raw amino-acid sequence, 150 residues long: MKNILKTQVHVVVIYLLIKIAFSQVKTDFDVNWSTSKMVRITNRLGDGLTLNLHCKSADDDLGLKILAPNGSWSFKFRTSIVGTTLFYCHFTWPGQSKRFDIYDDDRDGVRSHISCINCIWDISIQGPCMFSESDHAFNICYDWNGNLRT.

A signal peptide spans Met-1–Ser-23. Residues Asn-32 and Asn-70 are each glycosylated (N-linked (GlcNAc...) asparagine).

This sequence belongs to the plant self-incompatibility (S1) protein family.

The protein resides in the secreted. In Arabidopsis thaliana (Mouse-ear cress), this protein is S-protein homolog 3.